A 531-amino-acid polypeptide reads, in one-letter code: Probable peptide ABC transporter periplasmic-binding protein y4tO (531 aa).

Residues 1-32 (MTISRRDLFKAGLAAGAALSVPSLLRAQTAVA) constitute a signal peptide (tat-type signal).

Belongs to the bacterial solute-binding protein 5 family. Predicted to be exported by the Tat system. The position of the signal peptide cleavage has not been experimentally proven.

It localises to the periplasm. Functionally, probably part of the binding-protein-dependent transport system y4tOPQRS for a peptide. This is Probable peptide ABC transporter periplasmic-binding protein y4tO from Sinorhizobium fredii (strain NBRC 101917 / NGR234).